The primary structure comprises 339 residues: Serine racemase (339 aa).

Glu13 provides a ligand contact to Mg(2+). Ser31, Ser32, Ile33, Lys51, and Thr52 together coordinate ATP. Lys56 functions as the Proton acceptor in the catalytic mechanism. Residue Lys56 is modified to N6-(pyridoxal phosphate)lysine. Pro69 lines the Ca(2+) pocket. Thr71 is subject to Phosphothreonine. Thr81 lines the Ca(2+) pocket. Ser84 serves as the catalytic Proton acceptor. Asn86 serves as a coordination point for pyridoxal 5'-phosphate. Position 89 (Gln89) interacts with ATP. S-nitrosocysteine is present on Cys113. Residue Tyr121 coordinates ATP. Asn154 is a binding site for pyridoxal 5'-phosphate. Position 178 (Asp178) interacts with Mg(2+). 5 residues coordinate pyridoxal 5'-phosphate: Gly185, Gly186, Gly187, Gly188, and Met189. The Mg(2+) site is built by Glu210, Ala214, Asp216, and Asn247. Ca(2+) is bound by residues Glu210, Ala214, Asp216, and Asn247. 3 residues coordinate Mn(2+): Glu210, Ala214, and Asp216. Lys279 provides a ligand contact to ATP. Ser313 contacts pyridoxal 5'-phosphate. ATP is bound at residue Asn316.

Belongs to the serine/threonine dehydratase family. As to quaternary structure, homodimer. The cofactor is Mg(2+). Mn(2+) is required as a cofactor. Requires Ca(2+) as cofactor. Pyridoxal 5'-phosphate serves as cofactor. S-nitrosylated, leading to decrease the enzyme activity. Expressed in the hippocampus (at protein level). Expressed in the small intestine.

The catalysed reaction is L-serine = D-serine. The enzyme catalyses D-serine = pyruvate + NH4(+). It carries out the reaction L-serine = pyruvate + NH4(+). Allosterically activated by magnesium, and possibly also other divalent metal cations. Allosterically activated by ATP, ADP or GTP. Functionally, catalyzes the synthesis of D-serine from L-serine. D-serine is a key coagonist with glutamate at NMDA receptors. Has dehydratase activity towards both L-serine and D-serine. The protein is Serine racemase (Srr) of Mus musculus (Mouse).